We begin with the raw amino-acid sequence, 202 residues long: Josephin-1 (202 aa).

At S15 the chain carries Phosphoserine. Residues 23–202 form the Josephin domain; the sequence is PPQIYHEKQR…EAHQSWRTDV (180 aa). The active-site Nucleophile is C36. H139 (proton acceptor) is an active-site residue.

In terms of assembly, interacts with beta-actin/ACTB. Monoubiquitinated. Ubiquitination activates deubiquitination activity in vitro.

It is found in the cell membrane. Its subcellular location is the cytoplasm. It carries out the reaction Thiol-dependent hydrolysis of ester, thioester, amide, peptide and isopeptide bonds formed by the C-terminal Gly of ubiquitin (a 76-residue protein attached to proteins as an intracellular targeting signal).. Its function is as follows. Deubiquitinates monoubiquitinated probes (in vitro). When ubiquitinated, cleaves 'Lys-63'-linked and 'Lys-48'-linked poly-ubiquitin chains (in vitro), hence may act as a deubiquitinating enzyme. May increase macropinocytosis and suppress clathrin- and caveolae-mediated endocytosis. May enhance membrane dynamics and cell motility independently of its catalytic activity. This Pongo abelii (Sumatran orangutan) protein is Josephin-1 (JOSD1).